A 186-amino-acid chain; its full sequence is CoB--CoM heterodisulfide reductase iron-sulfur subunit C 2 (186 aa).

4Fe-4S ferredoxin-type domains follow at residues 26 to 56 (GEDIVKSIKACYQCGTCTGSCPSGRRTAYRT) and 67 to 99 (LDDVLDSDDIWYCTTCYTCYERCPRDVKITEII). The [4Fe-4S] cluster site is built by C36, C39, C42, C46, C79, C82, C85, and C89.

Belongs to the HdrC family. In terms of assembly, the heterodisulfide reductase is composed of three subunits; HdrA, HdrB and HdrC. Requires [4Fe-4S] cluster as cofactor.

It participates in cofactor metabolism; coenzyme M-coenzyme B heterodisulfide reduction; coenzyme B and coenzyme M from coenzyme M-coenzyme B heterodisulfide: step 1/1. Functionally, part of a complex that catalyzes the reversible reduction of CoM-S-S-CoB to the thiol-coenzymes H-S-CoM (coenzyme M) and H-S-CoB (coenzyme B). This Methanocaldococcus jannaschii (strain ATCC 43067 / DSM 2661 / JAL-1 / JCM 10045 / NBRC 100440) (Methanococcus jannaschii) protein is CoB--CoM heterodisulfide reductase iron-sulfur subunit C 2 (hdrC2).